The chain runs to 253 residues: Probable transcriptional regulatory protein AM1_1847 (253 aa).

This sequence belongs to the TACO1 family.

Its subcellular location is the cytoplasm. This chain is Probable transcriptional regulatory protein AM1_1847, found in Acaryochloris marina (strain MBIC 11017).